Here is a 296-residue protein sequence, read N- to C-terminus: MRATLRILCALTFLVSCSRGARVVSGQTVCQGNPEHPCYKIAYFKDVSSRVAFWEALQACEMDGGSLLSIENTAEQKHIEHLLRELSVSSSTGPASITDGDFWIGLTREEGDNAQEPGAFASCPNLYRWTDGSVSLFRNWYADEPSCGGEACVVMYHQPTALAGPGGPYLYQWNDDRCNMKHNFICKYEPESHLVKVQSDRPGGHDVDLSTEDKEDRRTPPTDEDESPRLIIAGPSSMLLIYVIIPTIPLLLLILVASGTCCFQMLSKSKPRTKTSVNQSTLWISKTPKIDSGMEV.

An N-terminal signal peptide occupies residues 1 to 20 (MRATLRILCALTFLVSCSRG). The Extracellular portion of the chain corresponds to 21 to 238 (ARVVSGQTVC…RLIIAGPSSM (218 aa)). The C-type lectin domain maps to 38-187 (CYKIAYFKDV…CNMKHNFICK (150 aa)). Over residues 197–221 (VQSDRPGGHDVDLSTEDKEDRRTPP) the composition is skewed to basic and acidic residues. Positions 197 to 229 (VQSDRPGGHDVDLSTEDKEDRRTPPTDEDESPR) are disordered. The chain crosses the membrane as a helical span at residues 239–266 (LLIYVIIPTIPLLLLILVASGTCCFQML). Residues 267 to 296 (SKSKPRTKTSVNQSTLWISKTPKIDSGMEV) are Cytoplasmic-facing.

In terms of tissue distribution, expressed in developing motor neurons.

The protein localises to the membrane. Its function is as follows. Plays a role in the development of the nervous system such as in neurite outgrowth and elongation. Involved in motor axon growth and guidance. Required for correct interactions of motor axons with the horizontal myoseptum. The polypeptide is Chondrolectin (chodl) (Danio rerio (Zebrafish)).